The primary structure comprises 82 residues: MGGISIWQLLIIAVIVVLLFGTKKLRGIGSDLGSAVKGFKKAMSEEESNSAANQKDADFETKNLEQAKTNASAEVKKDKEQA.

A helical transmembrane segment spans residues 1–21 (MGGISIWQLLIIAVIVVLLFG).

It belongs to the TatA/E family. As to quaternary structure, the Tat system comprises two distinct complexes: a TatABC complex, containing multiple copies of TatA, TatB and TatC subunits, and a separate TatA complex, containing only TatA subunits. Substrates initially bind to the TatABC complex, which probably triggers association of the separate TatA complex to form the active translocon.

The protein localises to the cell inner membrane. Part of the twin-arginine translocation (Tat) system that transports large folded proteins containing a characteristic twin-arginine motif in their signal peptide across membranes. TatA could form the protein-conducting channel of the Tat system. In Vibrio cholerae serotype O1 (strain ATCC 39315 / El Tor Inaba N16961), this protein is Sec-independent protein translocase protein TatA.